The following is a 122-amino-acid chain: NLMQFELLIMKVAGRSGIVWYSDYGCFCGKGGHGRPQDATDRCCFVHDCCYGKVTECDPKMDFYRYSSNNGDIVCEANNPCTKEICECDKAAAICFRDNKDTYDNKYWNIPMEGCQEESEPC.

Disulfide bonds link Cys-26-Cys-115, Cys-28-Cys-44, Cys-43-Cys-95, Cys-49-Cys-122, Cys-50-Cys-88, Cys-57-Cys-81, and Cys-75-Cys-86. Ca(2+) contacts are provided by Phe-27, Gly-29, and Gly-31. The active site involves His-47. Asp-48 contributes to the Ca(2+) binding site. Residue Asp-89 is part of the active site.

This sequence belongs to the phospholipase A2 family. Group II subfamily. D49 sub-subfamily. Monomer (predominant). Non-covalently linked homodimers are also observed. Ca(2+) serves as cofactor. In terms of tissue distribution, expressed by the venom gland.

It localises to the secreted. It carries out the reaction a 1,2-diacyl-sn-glycero-3-phosphocholine + H2O = a 1-acyl-sn-glycero-3-phosphocholine + a fatty acid + H(+). Its activity is regulated as follows. Preincubation with heparin slightly increase the enzymatic activity. Its function is as follows. Snake venom phospholipase A2 (PLA2) that inhibits platelet aggregation induced by ADP, arachidonic acid and PAF. Acts in a enzymatic independent manner on a proteinase-activated receptor (PAR1, F2R) to evoke calcium release through the inositol 1,4,5-trisphosphate receptor (ITPR1, IP3R) and induces mouse aorta contraction. PAR1, phospholipase C and IP3R inhibitors suppress PA2-induced aorta contraction. PLA2 catalyzes the calcium-dependent hydrolysis of the 2-acyl groups in 3-sn-phosphoglycerides. The polypeptide is Acidic phospholipase A2 5 (Trimeresurus stejnegeri (Chinese green tree viper)).